The chain runs to 239 residues: tRNA (guanine-N(7)-)-methyltransferase (239 aa).

Positions 69, 94, 121, and 144 each coordinate S-adenosyl-L-methionine. D144 is an active-site residue. K148 lines the substrate pocket. The interaction with RNA stretch occupies residues 150-155; it reads RHNKRR. Residues D180 and 217 to 220 contribute to the substrate site; that span reads TKFE.

The protein belongs to the class I-like SAM-binding methyltransferase superfamily. TrmB family. Monomer.

The enzyme catalyses guanosine(46) in tRNA + S-adenosyl-L-methionine = N(7)-methylguanosine(46) in tRNA + S-adenosyl-L-homocysteine. Its pathway is tRNA modification; N(7)-methylguanine-tRNA biosynthesis. In terms of biological role, catalyzes the formation of N(7)-methylguanine at position 46 (m7G46) in tRNA. The chain is tRNA (guanine-N(7)-)-methyltransferase from Salmonella typhi.